Reading from the N-terminus, the 250-residue chain is tRNA (guanine-N(7)-)-methyltransferase (250 aa).

4 residues coordinate S-adenosyl-L-methionine: Glu-79, Glu-104, Asp-131, and Asp-154. Asp-154 is an active-site residue. Residues Lys-158, Asp-190, and 228–231 (TKFE) contribute to the substrate site.

Belongs to the class I-like SAM-binding methyltransferase superfamily. TrmB family.

It catalyses the reaction guanosine(46) in tRNA + S-adenosyl-L-methionine = N(7)-methylguanosine(46) in tRNA + S-adenosyl-L-homocysteine. It participates in tRNA modification; N(7)-methylguanine-tRNA biosynthesis. Catalyzes the formation of N(7)-methylguanine at position 46 (m7G46) in tRNA. The sequence is that of tRNA (guanine-N(7)-)-methyltransferase from Actinobacillus pleuropneumoniae serotype 5b (strain L20).